Here is a 156-residue protein sequence, read N- to C-terminus: Arginine repressor (156 aa).

It belongs to the ArgR family.

Its subcellular location is the cytoplasm. It participates in amino-acid biosynthesis; L-arginine biosynthesis [regulation]. Its function is as follows. Regulates arginine biosynthesis genes. This chain is Arginine repressor, found in Shigella boydii serotype 18 (strain CDC 3083-94 / BS512).